A 231-amino-acid chain; its full sequence is Trypsin (231 aa).

The propeptide at 1–8 (FPTDDDDK) is activation peptide. The 221-residue stretch at 9-229 (IVGGYTCAAN…YVNWIQQTIA (221 aa)) folds into the Peptidase S1 domain. 6 disulfides stabilise this stretch: Cys-15-Cys-145, Cys-33-Cys-49, Cys-117-Cys-218, Cys-124-Cys-191, Cys-156-Cys-170, and Cys-181-Cys-205. His-48 acts as the Charge relay system in catalysis. 4 residues coordinate Ca(2+): Glu-60, Asn-62, Val-65, and Glu-70. Asp-92 (charge relay system) is an active-site residue. Ser-185 (charge relay system) is an active-site residue.

The protein belongs to the peptidase S1 family. It depends on Ca(2+) as a cofactor.

Its subcellular location is the secreted. It is found in the extracellular space. It catalyses the reaction Preferential cleavage: Arg-|-Xaa, Lys-|-Xaa.. The protein is Trypsin of Sus scrofa (Pig).